We begin with the raw amino-acid sequence, 560 residues long: IQ motif and ankyrin repeat domain-containing protein 1 (560 aa).

Positions 1-72 (MDSKKGRPKA…DRAARAIQGA (72 aa)) are disordered. Residues 62-91 (EDRAARAIQGAFRQLRARRELARRREERRE) form the IQ domain. ANK repeat units follow at residues 191–223 (YGNT…SKGA) and 224–253 (FGPT…DPRV). Positions 281 to 398 (LTEAMLQNME…RLELREQTQE (118 aa)) form a coiled coil.

This chain is IQ motif and ankyrin repeat domain-containing protein 1, found in Homo sapiens (Human).